The primary structure comprises 41 residues: Large ribosomal subunit protein bL36B (41 aa).

It belongs to the bacterial ribosomal protein bL36 family.

This chain is Large ribosomal subunit protein bL36B, found in Vibrio campbellii (strain ATCC BAA-1116).